The primary structure comprises 74 residues: MGFLRKKTLRREFDEKLTEQLFKQKEEWNRQKKLVEKSLEPSAEVLYELKVAEAKYFFYLREAKQRNLKISRWK.

This is an uncharacterized protein from Bacillus subtilis (strain 168).